We begin with the raw amino-acid sequence, 57 residues long: UPF0391 membrane protein RB0084 (57 aa).

2 consecutive transmembrane segments (helical) span residues 4–24 (WALIFFVISLIAGFLGFSGVS) and 33–53 (ILFYIAVIIFLVFLVLALAVG).

The protein belongs to the UPF0391 family.

The protein localises to the cell membrane. The chain is UPF0391 membrane protein RB0084 from Rhizobium meliloti (strain 1021) (Ensifer meliloti).